Here is a 359-residue protein sequence, read N- to C-terminus: MLYCRQGFEKECAGEIQDKATQLEVYGFPRVFKNAGYVLFECYQDGDADKLARELDFNALIFARQMFAVAAEFTELPSEDRISPILAELGEIDAFPVCGDLRIETPDTNEAKELLKFCRKFTVPMRQALRGKGLLLAKENAKKPVFHLCFVASGHCFAGYSYSHNNSRFFMGIPRLKFPADAPSRSTLKLEEAFHVFIPREEWDTRLSSGMWAVDLGACPGGWTYQLVQRSMFVHCVDNGMMADSLMETGQIKHHMVDGFKFEPDRKNVTWLVCDMVEKPARVAHLMGEWLIKGWAKETIFNLKLPMKGRYDEVLQDIENLKTFLIENKVKFKLQAKHLYHDREEITVHIQVLSNISPH.

S-adenosyl-L-methionine-binding positions include Ser186, 219–222, Asp238, Asp258, and Asp275; that span reads CPGG. Lys304 acts as the Proton acceptor in catalysis.

Belongs to the class I-like SAM-binding methyltransferase superfamily. RNA methyltransferase RlmE family. RlmM subfamily. As to quaternary structure, monomer.

It is found in the cytoplasm. The catalysed reaction is cytidine(2498) in 23S rRNA + S-adenosyl-L-methionine = 2'-O-methylcytidine(2498) in 23S rRNA + S-adenosyl-L-homocysteine + H(+). Catalyzes the 2'-O-methylation at nucleotide C2498 in 23S rRNA. In Vibrio vulnificus (strain YJ016), this protein is Ribosomal RNA large subunit methyltransferase M.